Here is a 174-residue protein sequence, read N- to C-terminus: MVIGLSTGSDDDDVEVIGGVDPRLIAVQENDSDESSLTDLVEQPAKVMRIGTMIKQLLEEVRAAPLDEASRNRLRDIHATSIRELEDGLAPELREELDRLTLPFNEDAVPSDAELRIAQAQLVGWLEGLFHGIQTALFAQQMAARAQLQQMRQGALPPGVGKSGQHGHGTGQYL.

Residues 153 to 174 (QGALPPGVGKSGQHGHGTGQYL) are disordered. The span at 161–174 (GKSGQHGHGTGQYL) shows a compositional bias: gly residues. Positions 172 to 174 (QYL) match the HbYX motif motif.

The protein belongs to the Bpa family. As to quaternary structure, forms a homooligomeric, either hexameric or heptameric, ring-like structure which stacks co-axially with the proteasomal alpha-rings.

Functionally, interacts with the core proteasome alpha-subunit (PrcA) through its C-terminal hydrophobic-tyrosine-X motif (HbYX motif). Interaction of Bpa with the proteasome stimulates proteasomal peptidase and casein degradation activity, which suggests Bpa could play a role in the removal of non-native or damaged proteins by influencing the conformation of the proteasome complex upon interaction. This is Bacterial proteasome activator (bpa) from Mycobacterium bovis (strain ATCC BAA-935 / AF2122/97).